Here is a 242-residue protein sequence, read N- to C-terminus: Floral homeotic protein AGAMOUS (242 aa).

In terms of domain architecture, MADS-box spans 19–73 (RGKIEIKRIENTTNRQVTFCKRRNGLLKKAYELSVLCDAEVALIVFSSRGRLYEY). A K-box domain is found at 103–193 (AQYYQQEASK…RAKIAETERS (91 aa)).

As to expression, expressed exclusively in stamens and carpels.

The protein resides in the nucleus. Probable transcription factor involved in regulating genes that determines stamen and carpel development in wild-type flowers. This chain is Floral homeotic protein AGAMOUS (AG1), found in Petunia hybrida (Petunia).